The sequence spans 407 residues: [Pyruvate dehydrogenase (acetyl-transferring)] kinase isozyme 2, mitochondrial (407 aa).

In terms of domain architecture, Histidine kinase spans 135–364; sequence LEYKDTYGDD…DAVIYLKALS (230 aa). 2 positions are modified to phosphotyrosine: Tyr-215 and Tyr-216. Residues 251 to 258, Asp-290, 309 to 310, and 325 to 330 each bind ATP; these read ELFKNAMR, ST, and GFGYGL. Lys-376 carries the N6-succinyllysine modification.

The protein belongs to the PDK/BCKDK protein kinase family. In terms of assembly, homodimer, and heterodimer with PDK1. Interacts with the pyruvate dehydrogenase complex subunit DLAT, and is part of the multimeric pyruvate dehydrogenase complex that contains multiple copies of pyruvate dehydrogenase (E1), dihydrolipoamide acetyltransferase (DLAT, E2) and lipoamide dehydrogenase (DLD, E3). Detected in heart (at protein level). Highest level of expression in heart and skeletal muscle and the lowest in spleen and lung. Liver, kidney, brain and testis levels are intermediate.

It localises to the mitochondrion matrix. It carries out the reaction L-seryl-[pyruvate dehydrogenase E1 alpha subunit] + ATP = O-phospho-L-seryl-[pyruvate dehydrogenase E1 alpha subunit] + ADP + H(+). With respect to regulation, activity increases in response to increased acetyl-CoA and NADH levels and upon binding to the pyruvate dehydrogenase subunit DLAT. Inhibited by ADP and pyruvate; these compounds interfere with DLAT binding and thereby inhibit kinase activity. Inhibited by dichloroacetate. Inhibited by AZD7545; this compound interferes with DLAT binding and thereby inhibits kinase activity. Reactive oxygen species cause the formation of disulfide bonds, and thereby inhibit the enzyme. Kinase that plays a key role in the regulation of glucose and fatty acid metabolism and homeostasis via phosphorylation of the pyruvate dehydrogenase subunits PDHA1 and PDHA2. This inhibits pyruvate dehydrogenase activity, and thereby regulates metabolite flux through the tricarboxylic acid cycle, down-regulates aerobic respiration and inhibits the formation of acetyl-coenzyme A from pyruvate. Inhibition of pyruvate dehydrogenase decreases glucose utilization and increases fat metabolism. Mediates cellular responses to insulin. Plays an important role in maintaining normal blood glucose levels and in metabolic adaptation to nutrient availability. Via its regulation of pyruvate dehydrogenase activity, plays an important role in maintaining normal blood pH and in preventing the accumulation of ketone bodies under starvation. Plays a role in the regulation of cell proliferation and in resistance to apoptosis under oxidative stress. Plays a role in p53/TP53-mediated apoptosis. The sequence is that of [Pyruvate dehydrogenase (acetyl-transferring)] kinase isozyme 2, mitochondrial (Pdk2) from Rattus norvegicus (Rat).